Here is a 675-residue protein sequence, read N- to C-terminus: Metal-nicotianamine transporter YSL3 (675 aa).

14 helical membrane-spanning segments follow: residues isoleucine 42–methionine 62, leucine 66–leucine 86, cysteine 114–leucine 134, glycine 159–valine 179, valine 219–phenylalanine 239, isoleucine 280–isoleucine 300, valine 325–phenylalanine 345, isoleucine 386–isoleucine 406, isoleucine 408–leucine 428, valine 450–valine 470, valine 504–phenylalanine 524, phenylalanine 556–alanine 576, phenylalanine 602–tryptophan 622, and alanine 630–leucine 650.

This sequence belongs to the YSL (TC 2.A.67.2) family. Expressed in leaves, anthers and pollen grains. Restricted to the vasculature.

Its subcellular location is the membrane. Its function is as follows. May be involved in the lateral transport of nicotianamine-chelated metals in the vasculature. In Arabidopsis thaliana (Mouse-ear cress), this protein is Metal-nicotianamine transporter YSL3 (YSL3).